Here is a 500-residue protein sequence, read N- to C-terminus: Cytochrome P450 71B34 (500 aa).

The chain crosses the membrane as a helical span at residues 1–21 (MTNIWLLSLIFVICILVAVFN). C440 is a heme binding site.

This sequence belongs to the cytochrome P450 family. Requires heme as cofactor.

The protein resides in the membrane. This chain is Cytochrome P450 71B34 (CYP71B34), found in Arabidopsis thaliana (Mouse-ear cress).